The chain runs to 424 residues: Protein maelstrom 1 (424 aa).

The segment at residues 2-69 (PPKKHSGFMM…LTRVKKERLN (68 aa)) is a DNA-binding region (HMG box).

Belongs to the maelstrom family.

The protein resides in the cytoplasm. It is found in the nucleus. In terms of biological role, involved both in the piRNA and miRNA metabolic processes. As a component of the meiotic nuage, plays a central role during oogenesis by repressing transposable elements and preventing their mobilization, which is essential for the germline integrity. Repression of transposable elements is mediated via the piRNA metabolic process, which mediates the repression of transposable elements during meiosis by forming complexes composed of piRNAs and Piwi proteins and governs the repression of transposons. As a nuclear component, it is required for proper differentiation in the germline stem cell (GSC) lineage by repressing microRNA-7 (miR-7), thereby acting as an indirect regulator of bag-of-marbles (Bam). Acts by binding to the promoter of miR-7 gene and repressing its expression; miR-7 repression alleviates the Bam repression by miR-7, thereby allowing differentiation in the germline stem cell (GSC) lineage. The chain is Protein maelstrom 1 (mael1) from Drosophila ananassae (Fruit fly).